The chain runs to 475 residues: Ribulose bisphosphate carboxylase large chain (475 aa).

A propeptide spanning residues 1-2 (MS) is cleaved from the precursor. An N-acetylproline modification is found at P3. Position 14 is an N6,N6,N6-trimethyllysine (K14). Substrate contacts are provided by N123 and T173. Catalysis depends on K175, which acts as the Proton acceptor. Position 177 (K177) interacts with substrate. Mg(2+) is bound by residues K201, D203, and E204. At K201 the chain carries N6-carboxylysine. H294 serves as the catalytic Proton acceptor. Substrate is bound by residues R295, H327, and S379.

It belongs to the RuBisCO large chain family. Type I subfamily. As to quaternary structure, heterohexadecamer of 8 large chains and 8 small chains; disulfide-linked. The disulfide link is formed within the large subunit homodimers. The cofactor is Mg(2+). Post-translationally, the disulfide bond which can form in the large chain dimeric partners within the hexadecamer appears to be associated with oxidative stress and protein turnover.

The protein localises to the plastid. Its subcellular location is the chloroplast. The catalysed reaction is 2 (2R)-3-phosphoglycerate + 2 H(+) = D-ribulose 1,5-bisphosphate + CO2 + H2O. It catalyses the reaction D-ribulose 1,5-bisphosphate + O2 = 2-phosphoglycolate + (2R)-3-phosphoglycerate + 2 H(+). In terms of biological role, ruBisCO catalyzes two reactions: the carboxylation of D-ribulose 1,5-bisphosphate, the primary event in carbon dioxide fixation, as well as the oxidative fragmentation of the pentose substrate in the photorespiration process. Both reactions occur simultaneously and in competition at the same active site. The chain is Ribulose bisphosphate carboxylase large chain from Cryptomeria japonica (Japanese cedar).